The chain runs to 366 residues: Heat-inducible transcription repressor HrcA (366 aa).

Residues 298-309 are compositionally biased toward polar residues; the sequence is SSGYGQSSTPSA. The tract at residues 298–318 is disordered; the sequence is SSGYGQSSTPSANVEHEEYDT.

It belongs to the HrcA family.

Functionally, negative regulator of class I heat shock genes (grpE-dnaK-dnaJ and groELS operons). Prevents heat-shock induction of these operons. The chain is Heat-inducible transcription repressor HrcA from Bifidobacterium animalis subsp. lactis (strain AD011).